The primary structure comprises 269 residues: Phosphate import ATP-binding protein PstB (269 aa).

In terms of domain architecture, ABC transporter spans alanine 22–valine 264. Glycine 54–threonine 61 lines the ATP pocket.

The protein belongs to the ABC transporter superfamily. Phosphate importer (TC 3.A.1.7) family. As to quaternary structure, the complex is composed of two ATP-binding proteins (PstB), two transmembrane proteins (PstC and PstA) and a solute-binding protein (PstS).

It is found in the cell inner membrane. The catalysed reaction is phosphate(out) + ATP + H2O = ADP + 2 phosphate(in) + H(+). Part of the ABC transporter complex PstSACB involved in phosphate import. Responsible for energy coupling to the transport system. In Thermosynechococcus vestitus (strain NIES-2133 / IAM M-273 / BP-1), this protein is Phosphate import ATP-binding protein PstB.